A 353-amino-acid chain; its full sequence is Tetraacyldisaccharide 4'-kinase (353 aa).

Position 66 to 73 (66 to 73) interacts with ATP; the sequence is TVGGTGKT.

Belongs to the LpxK family.

The enzyme catalyses a lipid A disaccharide + ATP = a lipid IVA + ADP + H(+). It participates in glycolipid biosynthesis; lipid IV(A) biosynthesis; lipid IV(A) from (3R)-3-hydroxytetradecanoyl-[acyl-carrier-protein] and UDP-N-acetyl-alpha-D-glucosamine: step 6/6. Functionally, transfers the gamma-phosphate of ATP to the 4'-position of a tetraacyldisaccharide 1-phosphate intermediate (termed DS-1-P) to form tetraacyldisaccharide 1,4'-bis-phosphate (lipid IVA). The polypeptide is Tetraacyldisaccharide 4'-kinase (Geobacter sulfurreducens (strain ATCC 51573 / DSM 12127 / PCA)).